Reading from the N-terminus, the 540-residue chain is Glucose-6-phosphate isomerase (540 aa).

Catalysis depends on glutamate 350, which acts as the Proton donor. Active-site residues include histidine 381 and lysine 503.

Belongs to the GPI family.

The protein localises to the cytoplasm. It carries out the reaction alpha-D-glucose 6-phosphate = beta-D-fructose 6-phosphate. It functions in the pathway carbohydrate biosynthesis; gluconeogenesis. The protein operates within carbohydrate degradation; glycolysis; D-glyceraldehyde 3-phosphate and glycerone phosphate from D-glucose: step 2/4. In terms of biological role, catalyzes the reversible isomerization of glucose-6-phosphate to fructose-6-phosphate. The polypeptide is Glucose-6-phosphate isomerase (Burkholderia multivorans (strain ATCC 17616 / 249)).